Here is a 363-residue protein sequence, read N- to C-terminus: uncharacterized protein (363 aa).

The disordered stretch occupies residues 35-262 (TVPGPPGAES…GLSPCCGDGG (228 aa)). Residues 56-75 (AVSSSRNPNSAGRTPNSYLT) are compositionally biased toward polar residues. Over residues 100-116 (GADPALGSLPAAGLSGL) the composition is skewed to low complexity.

This is an uncharacterized protein from Homo sapiens (Human).